Here is a 436-residue protein sequence, read N- to C-terminus: mRNA cap guanine-N(7) methyltransferase (436 aa).

A disordered region spans residues 1-50 (MSTKPEKPIWMSQEDYDRQYGSITGDESSTVSKKDSKVTANAPGDGNGSL). Positions 141-424 (SPIIKLRNFN…FYTMFAFRKV (284 aa)) constitute an mRNA cap 0 methyltransferase domain. MRNA is bound at residue 150 to 151 (NN). S-adenosyl-L-methionine-binding residues include Lys-154, Gly-172, Asp-194, Asp-223, Gln-249, and Tyr-254.

This sequence belongs to the class I-like SAM-binding methyltransferase superfamily. mRNA cap 0 methyltransferase family.

It localises to the nucleus. It catalyses the reaction a 5'-end (5'-triphosphoguanosine)-ribonucleoside in mRNA + S-adenosyl-L-methionine = a 5'-end (N(7)-methyl 5'-triphosphoguanosine)-ribonucleoside in mRNA + S-adenosyl-L-homocysteine. Its function is as follows. Responsible for methylating the 5'-cap structure of mRNAs. The polypeptide is mRNA cap guanine-N(7) methyltransferase (ABD1) (Saccharomyces cerevisiae (strain ATCC 204508 / S288c) (Baker's yeast)).